The sequence spans 1483 residues: Rho GTPase-activating protein 23 (1483 aa).

The segment at 15–34 is disordered; it reads PEPRPPQLPLGPRDGCSSGR. The PDZ domain occupies 71 to 155; that stretch reads HCILKEEENG…TLELSIMPKD (85 aa). Disordered stretches follow at residues 212 to 276 and 300 to 345; these read ISAL…PGSR and AGER…GQEG. Residues 316–325 are compositionally biased toward basic and acidic residues; that stretch reads SQDRLEDVTT. Over residues 331–342 the composition is skewed to polar residues; it reads CSTSQDALSQLG. Phosphoserine occurs at positions 361 and 372. The segment at 385–407 is disordered; that stretch reads PSARTSACPSRDLTQAPPPSGLQ. At S421 the chain carries Phosphoserine. Disordered regions lie at residues 448 to 485 and 508 to 527; these read SLAQSPASFPPEASEPPRVVRPDPSTRALEPPAEDHRD and NLGFGDESPEPEARGERLGR. Phosphoserine is present on residues S515, S579, S607, and S619. The residue at position 652 (T652) is a Phosphothreonine. Phosphoserine occurs at positions 655, 658, and 673. The PH domain occupies 684-804; the sequence is DIRREGWLYY…WIRAIRENSR (121 aa). The interval 827–848 is disordered; sequence KVSHSSGPKADSSPKGSRGLGG. A Glycyl lysine isopeptide (Lys-Gly) (interchain with G-Cter in SUMO2) cross-link involves residue K850. Disordered stretches follow at residues 860 to 879, 1093 to 1150, 1171 to 1361, and 1419 to 1469; these read RGLRTQEQPPGSKEDSVAAP, FSDD…SWVP, KRKK…GSRP, and ELGG…LQGL. The Rho-GAP domain maps to 901–1093; sequence IRLEECQPAT…TLIQHSDWFF (193 aa). The segment covering 1099–1110 has biased composition (basic and acidic residues); that stretch reads KGERTPVDDKEP. 2 stretches are compositionally biased toward polar residues: residues 1133-1144 and 1236-1248; these read GSDSTTCSSAKS and SIVSGYSTLSTMD. Low complexity predominate over residues 1338-1351; the sequence is GSASSSSQESLRPP. Over residues 1440–1457 the composition is skewed to polar residues; sequence SGLSSLESTKARASSAAS.

GTPase activator for the Rho-type GTPases by converting them to an inactive GDP-bound state. In Mus musculus (Mouse), this protein is Rho GTPase-activating protein 23 (Arhgap23).